Here is a 107-residue protein sequence, read N- to C-terminus: uncharacterized protein (107 aa).

The protein localises to the mitochondrion. This is an uncharacterized protein from Arabidopsis thaliana (Mouse-ear cress).